Consider the following 385-residue polypeptide: S-adenosylmethionine synthase (385 aa).

Position 16 (histidine 16) interacts with ATP. Position 18 (aspartate 18) interacts with Mg(2+). Glutamate 44 provides a ligand contact to K(+). Residues glutamate 57 and glutamine 100 each contribute to the L-methionine site. A flexible loop region spans residues 100–110 (QSPDINQGVDR). ATP contacts are provided by residues 164–166 (DGK), 230–231 (KF), aspartate 239, 245–246 (RK), alanine 262, and lysine 266. Position 239 (aspartate 239) interacts with L-methionine. Lysine 270 is an L-methionine binding site.

This sequence belongs to the AdoMet synthase family. Homotetramer; dimer of dimers. Mg(2+) is required as a cofactor. K(+) serves as cofactor.

The protein localises to the cytoplasm. The catalysed reaction is L-methionine + ATP + H2O = S-adenosyl-L-methionine + phosphate + diphosphate. The protein operates within amino-acid biosynthesis; S-adenosyl-L-methionine biosynthesis; S-adenosyl-L-methionine from L-methionine: step 1/1. Its function is as follows. Catalyzes the formation of S-adenosylmethionine (AdoMet) from methionine and ATP. The overall synthetic reaction is composed of two sequential steps, AdoMet formation and the subsequent tripolyphosphate hydrolysis which occurs prior to release of AdoMet from the enzyme. The polypeptide is S-adenosylmethionine synthase (Helicobacter acinonychis (strain Sheeba)).